Here is a 342-residue protein sequence, read N- to C-terminus: Predicted GPI-anchored protein 54 (342 aa).

An N-terminal signal peptide occupies residues 1 to 16 (MRANYLLLLAATAVQA). N-linked (GlcNAc...) asparagine glycans are attached at residues N25, N105, and N151. G314 carries GPI-anchor amidated glycine lipidation. The propeptide at 315 to 342 (ASQSHPISSYSNYTISDYAPPISSYYSL) is removed in mature form. The N-linked (GlcNAc...) asparagine glycan is linked to N326.

The protein resides in the cell membrane. The polypeptide is Predicted GPI-anchored protein 54 (PGA54) (Candida albicans (strain SC5314 / ATCC MYA-2876) (Yeast)).